The following is a 297-amino-acid chain: Lipoyl synthase (297 aa).

Positions 37, 42, 48, 63, 67, 70, and 276 each coordinate [4Fe-4S] cluster. In terms of domain architecture, Radical SAM core spans 49–265; the sequence is WSRKHATVMI…ERIAKTKGFL (217 aa).

The protein belongs to the radical SAM superfamily. Lipoyl synthase family. Requires [4Fe-4S] cluster as cofactor.

Its subcellular location is the cytoplasm. The enzyme catalyses [[Fe-S] cluster scaffold protein carrying a second [4Fe-4S](2+) cluster] + N(6)-octanoyl-L-lysyl-[protein] + 2 oxidized [2Fe-2S]-[ferredoxin] + 2 S-adenosyl-L-methionine + 4 H(+) = [[Fe-S] cluster scaffold protein] + N(6)-[(R)-dihydrolipoyl]-L-lysyl-[protein] + 4 Fe(3+) + 2 hydrogen sulfide + 2 5'-deoxyadenosine + 2 L-methionine + 2 reduced [2Fe-2S]-[ferredoxin]. The protein operates within protein modification; protein lipoylation via endogenous pathway; protein N(6)-(lipoyl)lysine from octanoyl-[acyl-carrier-protein]: step 2/2. In terms of biological role, catalyzes the radical-mediated insertion of two sulfur atoms into the C-6 and C-8 positions of the octanoyl moiety bound to the lipoyl domains of lipoate-dependent enzymes, thereby converting the octanoylated domains into lipoylated derivatives. This is Lipoyl synthase from Rickettsia prowazekii (strain Madrid E).